An 89-amino-acid polypeptide reads, in one-letter code: Progonadoliberin-1 (89 aa).

Residues 1 to 23 (MKAFPTFALLFLVLLFSAHVSDA) form the signal peptide. Q24 is modified (pyrrolidone carboxylic acid). G33 is modified (glycine amide).

It belongs to the GnRH family. Expressed in the forebrain from larval stages.

It localises to the secreted. Stimulates the secretion of gonadotropins. The protein is Progonadoliberin-1 (gnrh1) of Xenopus laevis (African clawed frog).